A 265-amino-acid polypeptide reads, in one-letter code: Phosphate import ATP-binding protein PstB (265 aa).

The region spanning 18–260 (IAAKGVNVYY…PEDPRTESYI (243 aa)) is the ABC transporter domain. 50 to 57 (GPSGCGKS) serves as a coordination point for ATP.

The protein belongs to the ABC transporter superfamily. Phosphate importer (TC 3.A.1.7) family. The complex is composed of two ATP-binding proteins (PstB), two transmembrane proteins (PstC and PstA) and a solute-binding protein (PstS).

It localises to the cell inner membrane. The enzyme catalyses phosphate(out) + ATP + H2O = ADP + 2 phosphate(in) + H(+). In terms of biological role, part of the ABC transporter complex PstSACB involved in phosphate import. Responsible for energy coupling to the transport system. The polypeptide is Phosphate import ATP-binding protein PstB (Ruegeria sp. (strain TM1040) (Silicibacter sp.)).